Here is a 454-residue protein sequence, read N- to C-terminus: Bifunctional protein GlmU (454 aa).

A pyrophosphorylase region spans residues Met-1–Arg-226. Residues Leu-8–Gly-11, Lys-22, Gln-73, Gly-78–Thr-79, Tyr-100–Asp-102, Gly-137, Glu-151, Asn-166, and Asn-224 contribute to the UDP-N-acetyl-alpha-D-glucosamine site. Asp-102 provides a ligand contact to Mg(2+). Asn-224 provides a ligand contact to Mg(2+). The linker stretch occupies residues Val-227–Glu-247. Positions Gly-248 to Lys-454 are N-acetyltransferase. Positions 330 and 348 each coordinate UDP-N-acetyl-alpha-D-glucosamine. His-360 (proton acceptor) is an active-site residue. UDP-N-acetyl-alpha-D-glucosamine is bound by residues Tyr-363 and Asn-374. Acetyl-CoA contacts are provided by residues Ala-377, Asn-383–Tyr-384, Ser-402, Ala-420, and Arg-437.

It in the N-terminal section; belongs to the N-acetylglucosamine-1-phosphate uridyltransferase family. This sequence in the C-terminal section; belongs to the transferase hexapeptide repeat family. Homotrimer. It depends on Mg(2+) as a cofactor.

The protein localises to the cytoplasm. The enzyme catalyses alpha-D-glucosamine 1-phosphate + acetyl-CoA = N-acetyl-alpha-D-glucosamine 1-phosphate + CoA + H(+). It carries out the reaction N-acetyl-alpha-D-glucosamine 1-phosphate + UTP + H(+) = UDP-N-acetyl-alpha-D-glucosamine + diphosphate. Its pathway is nucleotide-sugar biosynthesis; UDP-N-acetyl-alpha-D-glucosamine biosynthesis; N-acetyl-alpha-D-glucosamine 1-phosphate from alpha-D-glucosamine 6-phosphate (route II): step 2/2. It functions in the pathway nucleotide-sugar biosynthesis; UDP-N-acetyl-alpha-D-glucosamine biosynthesis; UDP-N-acetyl-alpha-D-glucosamine from N-acetyl-alpha-D-glucosamine 1-phosphate: step 1/1. The protein operates within bacterial outer membrane biogenesis; LPS lipid A biosynthesis. Functionally, catalyzes the last two sequential reactions in the de novo biosynthetic pathway for UDP-N-acetylglucosamine (UDP-GlcNAc). The C-terminal domain catalyzes the transfer of acetyl group from acetyl coenzyme A to glucosamine-1-phosphate (GlcN-1-P) to produce N-acetylglucosamine-1-phosphate (GlcNAc-1-P), which is converted into UDP-GlcNAc by the transfer of uridine 5-monophosphate (from uridine 5-triphosphate), a reaction catalyzed by the N-terminal domain. The sequence is that of Bifunctional protein GlmU from Shewanella woodyi (strain ATCC 51908 / MS32).